We begin with the raw amino-acid sequence, 168 residues long: MISNFDCTDNQASSKVLRPPGGGSSDIFGSEMPQTPRNVKNRMASNIFAAEKDNGVKNNVRQGAHRFYFIGDAPRRGQKTVDSHSRLFGEPTRPITPGKNHMKSSIPFGQNTEAVAAQKLLTTNGHYNGKSGSVSSASSSVSSSTENLKMNSGSRSGEKRLALTGAGK.

Residues 1-14 (MISNFDCTDNQASS) are compositionally biased toward polar residues. Residues 1-33 (MISNFDCTDNQASSKVLRPPGGGSSDIFGSEMP) are disordered. Residue S24 is modified to Phosphoserine. T35 carries the phosphothreonine modification. The segment covering 76–87 (RGQKTVDSHSRL) has biased composition (basic and acidic residues). Disordered regions lie at residues 76–106 (RGQK…KSSI) and 124–168 (NGHY…GAGK). A phosphothreonine mark is found at T92 and T96. Residues S105, S133, and S144 each carry the phosphoserine modification. Over residues 131–144 (SGSVSSASSSVSSS) the composition is skewed to low complexity. The segment covering 145 to 155 (TENLKMNSGSR) has biased composition (polar residues).

Belongs to the MAP Jupiter family.

It localises to the nucleus. The protein resides in the cytoplasm. The protein localises to the cytoskeleton. Its subcellular location is the spindle. Functionally, binds to all microtubule populations. This chain is Microtubule-associated protein Jupiter, found in Drosophila simulans (Fruit fly).